The sequence spans 323 residues: Acetyl esterase (323 aa).

The Involved in the stabilization of the negatively charged intermediate by the formation of the oxyanion hole signature appears at 91 to 93; it reads HGG. Residues S165, D262, and H292 contribute to the active site.

It belongs to the 'GDXG' lipolytic enzyme family. Homodimer. Interacts with MalT and MelA.

Its subcellular location is the cytoplasm. Displays esterase activity towards short chain fatty esters (acyl chain length of up to 8 carbons). Able to hydrolyze triacetylglycerol (triacetin) and tributyrylglycerol (tributyrin), but not trioleylglycerol (triolein) or cholesterol oleate. Negatively regulates MalT activity by antagonizing maltotriose binding. Inhibits MelA galactosidase activity. The protein is Acetyl esterase of Salmonella paratyphi A (strain ATCC 9150 / SARB42).